Consider the following 157-residue polypeptide: dCTP deaminase (157 aa).

DCTP is bound by residues 79-84 (RSSLAR), Asp95, Gln124, and Tyr138.

It belongs to the dCTP deaminase family. In terms of assembly, homotrimer.

The catalysed reaction is dCTP + H2O + H(+) = dUTP + NH4(+). It participates in pyrimidine metabolism; dUMP biosynthesis; dUMP from dCTP (dUTP route): step 1/2. Its function is as follows. Catalyzes the deamination of dCTP to dUTP. In Thermococcus gammatolerans (strain DSM 15229 / JCM 11827 / EJ3), this protein is dCTP deaminase.